The sequence spans 214 residues: MSKPPPKPAKPGQVKVFRALFTFDPRTPDELYFEEGDILYISDTSDTNWWKGTCRGRTGLIPSNYVAEQAETIDHPMHEAAKRGNLSWLRECVENKVGINGLDKAGNTALYWACHGGHKDVVELLLNQPSVELNQQNKLGDTVLHAAAWKGYSDIVEMLLDKNARTDIRNNENKLALEMATNAQCASLLKRKQGTNVTRTLSNAEEYLDDDDSD.

An SH3 domain is found at 12 to 71; that stretch reads GQVKVFRALFTFDPRTPDELYFEEGDILYISDTSDTNWWKGTCRGRTGLIPSNYVAEQAE. 3 ANK repeats span residues 72 to 101, 105 to 135, and 139 to 168; these read TIDHPMHEAAKRGNLSWLRECVENKVGING, AGNTALYWACHGGHKDVVELLLNQPSVELNQ, and LGDTVLHAAAWKGYSDIVEMLLDKNARTDI.

As to expression, ubiquitously expressed.

It is found in the cytoplasm. In terms of biological role, induces bone resorption, acting probably through a signaling cascade which results in the secretion of factor(s) enhancing osteoclast formation and activity. In Monopterus albus (Swamp eel), this protein is Osteoclast-stimulating factor 1 (ostf1).